The chain runs to 161 residues: Probable cell wall elongation regulator TseB (161 aa).

Residues 1–5 lie on the Cytoplasmic side of the membrane; that stretch reads MRKKA. Residues 6-26 form a helical membrane-spanning segment; that stretch reads LIFTVIFGIIFLAVLLVSASI. The Extracellular segment spans residues 27 to 161; that stretch reads YKSAMAQKEE…TGKILKNITP (135 aa).

As to quaternary structure, interacts with the penicillin-binding protein PBP2A, a monofunctional transpeptidase.

Its subcellular location is the cell membrane. In terms of biological role, required for normal cell shape. Plays an important role in cell wall elongation during exponential phase and spore outgrowth. Probably regulates the activity of the penicillin-binding protein PBP2A through a direct interaction. Not required for PBP2A activity, stability and localization. This Bacillus subtilis (strain 168) protein is Probable cell wall elongation regulator TseB.